The chain runs to 303 residues: Ornithine carbamoyltransferase (303 aa).

Carbamoyl phosphate contacts are provided by residues 52 to 55 (STRT), glutamine 79, arginine 103, and 130 to 133 (HPCQ). L-ornithine-binding positions include asparagine 161, aspartate 222, and 226–227 (SM). Carbamoyl phosphate contacts are provided by residues 262–263 (CL) and lysine 290.

The protein belongs to the aspartate/ornithine carbamoyltransferase superfamily. OTCase family.

The protein resides in the cytoplasm. It carries out the reaction carbamoyl phosphate + L-ornithine = L-citrulline + phosphate + H(+). Its pathway is amino-acid biosynthesis; L-arginine biosynthesis; L-arginine from L-ornithine and carbamoyl phosphate: step 1/3. Reversibly catalyzes the transfer of the carbamoyl group from carbamoyl phosphate (CP) to the N(epsilon) atom of ornithine (ORN) to produce L-citrulline. The polypeptide is Ornithine carbamoyltransferase (Desulfotalea psychrophila (strain LSv54 / DSM 12343)).